Consider the following 354-residue polypeptide: WASH complex subunit 3 (354 aa).

The tract at residues 76–354 (SSANVPVHNT…DDDDDDDESW (279 aa)) is disordered. Residues 107 to 143 (IPPPPPPPPPPMTGVPPPPPPPPPPPISKSNIPPPPA) are compositionally biased toward pro residues. The segment covering 150–159 (ESDDDDEDNN) has biased composition (acidic residues). A compositionally biased stretch (pro residues) spans 213–244 (PQPPQPQPQSPSPQPPPPPTTTSSIPVPPPPF). Over residues 251–260 (SDDDDDDDEG) the composition is skewed to acidic residues. Over residues 277 to 290 (NNNSNSNSYSNNNN) the composition is skewed to low complexity. Composition is skewed to acidic residues over residues 293–307 (DDDDDDDDDDDDDDN) and 342–354 (DADDDDDDDDESW).

This sequence belongs to the CCDC53 family. Probable component of the WASH complex.

In Dictyostelium discoideum (Social amoeba), this protein is WASH complex subunit 3.